Consider the following 209-residue polypeptide: MAQRFKGRSLFLTALLCLASQGYAVGLGDMLERASQLSDKLHSLSTSLTNDLDTHFPPMGKILMPRPSMCHTASLQTPHDKDQALRVPESELLSIARALLLSWNDPLLLLASEAPTLSHPQNGAIYSKTRELQDQSNSLSSGLDRLIHKIGSSSKALSPLPLQGGDLGSDKNSRLINFYFLLSCFRRDSHKIDNFLKLLRCRAAKQDRC.

Positions 1 to 24 (MAQRFKGRSLFLTALLCLASQGYA) are cleaved as a signal peptide. Disulfide bonds link Cys70-Cys184 and Cys201-Cys209.

It belongs to the somatotropin/prolactin family.

Its subcellular location is the secreted. The sequence is that of Prolactin (prl) from Anguilla anguilla (European freshwater eel).